The sequence spans 150 residues: Ribosome maturation factor RimP (150 aa).

Belongs to the RimP family.

It is found in the cytoplasm. Functionally, required for maturation of 30S ribosomal subunits. The chain is Ribosome maturation factor RimP from Salmonella dublin (strain CT_02021853).